We begin with the raw amino-acid sequence, 507 residues long: Aromatase (507 aa).

Residue Cys-436 coordinates heme.

It belongs to the cytochrome P450 family. It depends on heme as a cofactor.

The protein localises to the membrane. It carries out the reaction testosterone + 3 reduced [NADPH--hemoprotein reductase] + 3 O2 = 17beta-estradiol + formate + 3 oxidized [NADPH--hemoprotein reductase] + 4 H2O + 4 H(+). It catalyses the reaction androst-4-ene-3,17-dione + 3 reduced [NADPH--hemoprotein reductase] + 3 O2 = estrone + formate + 3 oxidized [NADPH--hemoprotein reductase] + 4 H2O + 4 H(+). Its function is as follows. Catalyzes the formation of aromatic C18 estrogens from C19 androgens. The sequence is that of Aromatase (CYP19A1) from Gallus gallus (Chicken).